The primary structure comprises 127 residues: Large ribosomal subunit protein uL24B (127 aa).

This sequence belongs to the universal ribosomal protein uL24 family. As to quaternary structure, component of the large ribosomal subunit (LSU). Mature yeast ribosomes consist of a small (40S) and a large (60S) subunit. The 40S small subunit contains 1 molecule of ribosomal RNA (18S rRNA) and 33 different proteins (encoded by 57 genes). The large 60S subunit contains 3 rRNA molecules (25S, 5.8S and 5S rRNA) and 46 different proteins (encoded by 81 genes).

The protein resides in the cytoplasm. Its function is as follows. Component of the ribosome, a large ribonucleoprotein complex responsible for the synthesis of proteins in the cell. The small ribosomal subunit (SSU) binds messenger RNAs (mRNAs) and translates the encoded message by selecting cognate aminoacyl-transfer RNA (tRNA) molecules. The large subunit (LSU) contains the ribosomal catalytic site termed the peptidyl transferase center (PTC), which catalyzes the formation of peptide bonds, thereby polymerizing the amino acids delivered by tRNAs into a polypeptide chain. The nascent polypeptides leave the ribosome through a tunnel in the LSU and interact with protein factors that function in enzymatic processing, targeting, and the membrane insertion of nascent chains at the exit of the ribosomal tunnel. This is Large ribosomal subunit protein uL24B from Saccharomyces cerevisiae (strain ATCC 204508 / S288c) (Baker's yeast).